The chain runs to 518 residues: G-protein coupled receptor 161 (518 aa).

Over 1–26 the chain is Extracellular; that stretch reads MNSSSDGANEGAGAAADNGPTKVAES. A glycan (N-linked (GlcNAc...) asparagine) is linked at N2. Residues 27 to 47 form a helical membrane-spanning segment; it reads IAIIIIDILICLGNLVIVVTL. Topologically, residues 48–59 are cytoplasmic; sequence YKKSYLLSLSNK. A helical transmembrane segment spans residues 60 to 80; it reads FVFSLTFSNLLLSMLVLPFVV. At 81 to 97 the chain is on the extracellular side; sequence VSSILREWIFGVVWCNF. C95 and C173 are oxidised to a cystine. N96 carries N-linked (GlcNAc...) asparagine glycosylation. Residues 98 to 118 traverse the membrane as a helical segment; it reads SALLYMLISSASMLTLGIIAI. Residues 119–138 lie on the Cytoplasmic side of the membrane; that stretch reads DRYYAVLYPMVYPMKITGNR. A helical transmembrane segment spans residues 139 to 159; it reads AVLALVYVWLHSLIGCLPPLF. Topologically, residues 160-185 are extracellular; it reads GWSTLEFDHFKWMCVAAWHKEAGYTA. Residues 186–206 form a helical membrane-spanning segment; it reads FWQVWCALLPFIVMMICYGFI. Residues 207–264 are Cytoplasmic-facing; sequence FRVARIKARKIHCGTVIIVQEASQKNGRKNSSTSTSSSGSRKNGFSSIVYSANQCKAL. The helical transmembrane segment at 265–285 threads the bilayer; it reads ITILVVIGAFVLTWGPYMIVI. The Extracellular segment spans residues 286–301; the sequence is STEALKGKNSVSPVLE. A helical membrane pass occupies residues 302–322; it reads TLATWLSFTSAICHPLIYGLW. Topologically, residues 323-518 are cytoplasmic; the sequence is NKTVRKELLG…GNIETSKCDV (196 aa). Positions 429–448 are disordered; the sequence is EVEQKNDARTMPTQPTAPSE. The segment covering 439–448 has biased composition (polar residues); the sequence is MPTQPTAPSE.

This sequence belongs to the G-protein coupled receptor 1 family.

Its subcellular location is the cell projection. The protein localises to the cilium membrane. It is found in the cell membrane. Its function is as follows. Key negative regulator of Shh signaling during neural tube development. Recruited to primary cilia and acts as a regulator of the PKA-dependent basal repression machinery in Shh signaling by increasing cAMP levels, leading to promote the PKA-dependent processing of gli3 into gli3r and repress the Shh signaling. In presence of shh, it is removed from primary cilia, preventing its activity and allowing activation of the Shh signaling. The polypeptide is G-protein coupled receptor 161 (gpr161) (Xenopus tropicalis (Western clawed frog)).